The sequence spans 246 residues: Anionic trypsin-2 (246 aa).

The first 15 residues, 1–15, serve as a signal peptide directing secretion; sequence MSALLILALVGAAVA. A propeptide spans 16 to 23 (activation peptide); sequence FPVDDDDK. The 221-residue stretch at 24–244 folds into the Peptidase S1 domain; that stretch reads IVGGYTCRES…YVDWIQNTIA (221 aa). 6 disulfide bridges follow: Cys-30/Cys-160, Cys-48/Cys-64, Cys-132/Cys-233, Cys-139/Cys-206, Cys-171/Cys-185, and Cys-196/Cys-220. His-63 serves as the catalytic Charge relay system. Ca(2+) is bound by residues Glu-75, Asn-77, Val-80, and Glu-85. The active-site Charge relay system is Asp-107. The active-site Charge relay system is the Ser-200.

It belongs to the peptidase S1 family. Ca(2+) serves as cofactor. Expressed in the pancreas, lung and kidney.

The protein resides in the secreted. It localises to the extracellular space. The catalysed reaction is Preferential cleavage: Arg-|-Xaa, Lys-|-Xaa.. The chain is Anionic trypsin-2 (Prss2) from Mus musculus (Mouse).